Reading from the N-terminus, the 132-residue chain is Small ribosomal subunit protein uS11 (132 aa).

Belongs to the universal ribosomal protein uS11 family. Part of the 30S ribosomal subunit. Interacts with proteins S7 and S18. Binds to IF-3.

Its function is as follows. Located on the platform of the 30S subunit, it bridges several disparate RNA helices of the 16S rRNA. Forms part of the Shine-Dalgarno cleft in the 70S ribosome. The chain is Small ribosomal subunit protein uS11 from Bifidobacterium animalis subsp. lactis (strain AD011).